Here is a 417-residue protein sequence, read N- to C-terminus: WD repeat and FYVE domain-containing protein 2 (417 aa).

4 WD repeats span residues 29–68, 119–157, 202–241, and 245–284; these read GHVARINDVILLSKDEGVWTASDDRSVRLYLKRDNDQFWP, CHAGPISGLGFALSSELIFSCSRDKSIVWHCSENSNKVG, AHTNSITSLTWDGNKKVLYSGSSDHLIIMWDIGGGKGEAY, and GHNGKVTTLCAAPAAKRLFSADEHGKLMCWDMDVRRVETP. An FYVE-type zinc finger spans residues 286-357; it reads WKTSDCCQKC…ICNDCAGRMK (72 aa). The Zn(2+) site is built by Cys292, Cys295, Cys319, Cys322, Cys327, Cys330, Cys349, and Cys352. The WD 5 repeat unit spans residues 373-412; that stretch reads EIRTGITAMHLQETLGLLVTSGQNRVVMIWDVRSVCSAPS.

In terms of biological role, plays a role in coelomocyte endocytosis. This is WD repeat and FYVE domain-containing protein 2 from Caenorhabditis briggsae.